The chain runs to 2281 residues: Protein Ycf2 (2281 aa).

Gly1634–Ser1641 serves as a coordination point for ATP.

The protein belongs to the Ycf2 family.

The protein localises to the plastid. It is found in the chloroplast stroma. Its function is as follows. Probable ATPase of unknown function. Its presence in a non-photosynthetic plant (Epifagus virginiana) and experiments in tobacco indicate that it has an essential function which is probably not related to photosynthesis. The chain is Protein Ycf2 from Buxus microphylla (Littleleaf boxwood).